Consider the following 194-residue polypeptide: Peptidyl-tRNA hydrolase (194 aa).

Tyr-17 is a binding site for tRNA. The Proton acceptor role is filled by His-22. TRNA-binding residues include Phe-68, Asn-70, and Asn-116.

It belongs to the PTH family. In terms of assembly, monomer.

The protein localises to the cytoplasm. The enzyme catalyses an N-acyl-L-alpha-aminoacyl-tRNA + H2O = an N-acyl-L-amino acid + a tRNA + H(+). Functionally, hydrolyzes ribosome-free peptidyl-tRNAs (with 1 or more amino acids incorporated), which drop off the ribosome during protein synthesis, or as a result of ribosome stalling. Its function is as follows. Catalyzes the release of premature peptidyl moieties from peptidyl-tRNA molecules trapped in stalled 50S ribosomal subunits, and thus maintains levels of free tRNAs and 50S ribosomes. The polypeptide is Peptidyl-tRNA hydrolase (Shewanella halifaxensis (strain HAW-EB4)).